The following is a 320-amino-acid chain: Cytochrome f (320 aa).

A signal peptide spans 1-35 (MQTRNTFSWIREEITRSISVSLIIYIITWASISSA). Residues Tyr-36, Cys-56, Cys-59, and His-60 each contribute to the heme site. Residues 286 to 305 (VQGLLFFLGSVVLAQIFLVL) form a helical membrane-spanning segment.

The protein belongs to the cytochrome f family. As to quaternary structure, the 4 large subunits of the cytochrome b6-f complex are cytochrome b6, subunit IV (17 kDa polypeptide, petD), cytochrome f and the Rieske protein, while the 4 small subunits are PetG, PetL, PetM and PetN. The complex functions as a dimer. Heme serves as cofactor.

The protein localises to the plastid. Its subcellular location is the chloroplast thylakoid membrane. Its function is as follows. Component of the cytochrome b6-f complex, which mediates electron transfer between photosystem II (PSII) and photosystem I (PSI), cyclic electron flow around PSI, and state transitions. The protein is Cytochrome f (petA) of Arabidopsis thaliana (Mouse-ear cress).